Consider the following 420-residue polypeptide: Probable 3-isopropylmalate dehydratase large subunit (420 aa).

Positions 301, 361, and 364 each coordinate [4Fe-4S] cluster.

Belongs to the aconitase/IPM isomerase family. LeuC type 2 subfamily. Heterodimer of LeuC and LeuD. It depends on [4Fe-4S] cluster as a cofactor.

It catalyses the reaction (2R,3S)-3-isopropylmalate = (2S)-2-isopropylmalate. It participates in amino-acid biosynthesis; L-leucine biosynthesis; L-leucine from 3-methyl-2-oxobutanoate: step 2/4. Its function is as follows. Catalyzes the isomerization between 2-isopropylmalate and 3-isopropylmalate, via the formation of 2-isopropylmaleate. The sequence is that of Probable 3-isopropylmalate dehydratase large subunit from Methanosarcina mazei (strain ATCC BAA-159 / DSM 3647 / Goe1 / Go1 / JCM 11833 / OCM 88) (Methanosarcina frisia).